Reading from the N-terminus, the 473-residue chain is Ribulose bisphosphate carboxylase large chain (473 aa).

Positions 1-2 (MS) are excised as a propeptide. P3 is modified (N-acetylproline). An N6,N6,N6-trimethyllysine modification is found at K14. The substrate site is built by N123 and T173. K175 functions as the Proton acceptor in the catalytic mechanism. Residue K177 participates in substrate binding. Positions 201, 203, and 204 each coordinate Mg(2+). K201 carries the N6-carboxylysine modification. The active-site Proton acceptor is H294. Substrate contacts are provided by R295, H327, and S379.

Belongs to the RuBisCO large chain family. Type I subfamily. In terms of assembly, heterohexadecamer of 8 large chains and 8 small chains; disulfide-linked. The disulfide link is formed within the large subunit homodimers. Mg(2+) serves as cofactor. The disulfide bond which can form in the large chain dimeric partners within the hexadecamer appears to be associated with oxidative stress and protein turnover.

The protein resides in the plastid. It is found in the chloroplast. The catalysed reaction is 2 (2R)-3-phosphoglycerate + 2 H(+) = D-ribulose 1,5-bisphosphate + CO2 + H2O. It carries out the reaction D-ribulose 1,5-bisphosphate + O2 = 2-phosphoglycolate + (2R)-3-phosphoglycerate + 2 H(+). In terms of biological role, ruBisCO catalyzes two reactions: the carboxylation of D-ribulose 1,5-bisphosphate, the primary event in carbon dioxide fixation, as well as the oxidative fragmentation of the pentose substrate in the photorespiration process. Both reactions occur simultaneously and in competition at the same active site. This Monarda didyma (Scarlet bee-balm) protein is Ribulose bisphosphate carboxylase large chain.